The chain runs to 116 residues: U16-barytoxin-Tl1d (116 aa).

A signal peptide spans 1-20 (MKTIIVFLSLLVLATKFGDA). Positions 21–74 (NEGVNQEQMKEVIQNEFREDFLNEMAAMSLLQQLEAIESTLLEKEADRNSRQKR) are excised as a propeptide. Disulfide bonds link cysteine 75–cysteine 90, cysteine 82–cysteine 95, and cysteine 89–cysteine 110.

It belongs to the neurotoxin 14 (magi-1) family. 06 (ICK-Trit) subfamily. As to expression, expressed by the venom gland.

The protein resides in the secreted. Functionally, ion channel inhibitor. This chain is U16-barytoxin-Tl1d, found in Trittame loki (Brush-footed trapdoor spider).